The primary structure comprises 311 residues: Meteorin-like protein (311 aa).

The signal sequence occupies residues 1-45 (MRGVVWAARRRAGQQWPRSPGPGPGPPPPPPLLLLLLLLLGGASA). A disulfide bridge links Cys52 with Cys75. Residue Asn103 is glycosylated (N-linked (GlcNAc...) asparagine). Intrachain disulfides connect Cys107-Cys143, Cys188-Cys260, Cys191-Cys284, and Cys201-Cys306.

It belongs to the meteorin family. As to expression, abundantly expressed in adipose tissue.

It is found in the secreted. Functionally, hormone induced following exercise or cold exposure that promotes energy expenditure. Induced either in the skeletal muscle after exercise or in adipose tissue following cold exposure and is present in the circulation. Able to stimulate energy expenditure associated with the browning of the white fat depots and improves glucose tolerance. Does not promote an increase in a thermogenic gene program via direct action on adipocytes, but acts by stimulating several immune cell subtypes to enter the adipose tissue and activate their prothermogenic actions. Stimulates an eosinophil-dependent increase in IL4 expression and promotes alternative activation of adipose tissue macrophages, which are required for the increased expression of the thermogenic and anti-inflammatory gene programs in fat. Required for some cold-induced thermogenic responses, suggesting a role in metabolic adaptations to cold temperatures. The sequence is that of Meteorin-like protein (Metrnl) from Rattus norvegicus (Rat).